Reading from the N-terminus, the 892-residue chain is Zinc finger protein 473 homolog (892 aa).

In terms of domain architecture, KRAB spans 23-101 (ETLKDLAMDF…TKSSPLQSGF (79 aa)). Polar residues-rich tracts occupy residues 66–76 (DTSQPSLTSQP) and 84–97 (ATSTEVPETKSSPL). Disordered stretches follow at residues 66-97 (DTSQPSLTSQPDVREELEATSTEVPETKSSPL) and 134-203 (GDPE…DSVQ). Basic and acidic residues-rich tracts occupy residues 138-156 (SLPRPDISDKESPADHQSP) and 190-203 (KESRSDLSQEDSVQ). C2H2-type zinc fingers lie at residues 209–231 (YKCSECGESFSQSHHLIQHWVLH) and 265–287 (YTCQECGKRFSQNVYLQWHQKIH). Residues 297-308 (SDSNLEGLSRSP) are compositionally biased toward polar residues. The interval 297–370 (SDSNLEGLSR…HPKPLRHQKT (74 aa)) is disordered. Basic and acidic residues-rich tracts occupy residues 313-323 (GKQRLSKDTDS) and 332-353 (QDQEKPPTGESRDQENLHESQP). 8 consecutive C2H2-type zinc fingers follow at residues 377 to 399 (FRCKKCGETFSGAFHLAKHQRAH), 404 to 426 (YKCASCPAVFNLSKHCFQHRKSH), 432 to 454 (CECQGCRKSFNWRSSLIKHQAIH), 460 to 482 (YKCDECGKAFNHSSTLKIHQRIH), 488 to 510 (HKCSECGKAFCRRTDLTEHQRVH), 516 to 538 (HQCPVCARTFNRPSHLVRHRLRH), 544 to 566 (FGCAKCKETFIYKEQLERHNKIH), and 572 to 594 (YECKQCGEHFICRSTLNCHLSIH). A Glycyl lysine isopeptide (Lys-Gly) (interchain with G-Cter in SUMO2) cross-link involves residue Lys476. Lys602 participates in a covalent cross-link: Glycyl lysine isopeptide (Lys-Gly) (interchain with G-Cter in SUMO2). A C2H2-type 11; degenerate zinc finger spans residues 697 to 719 (FKCDIYNRAFKQRAHLSKHQLIH). 6 C2H2-type zinc fingers span residues 725–747 (FKCNECDRAFKQSNYLIQHQKTH), 753–775 (FECSECGKTFHQRSCLSKHQKIH), 781–803 (FKCGDCGKAFISGAQLIRHQRIH), 809–831 (YVCQECGKTFSQSSCLTLHLRIH), 837–859 (YTCGTCGKAFAQRANQRKHERIH), and 865–887 (YACGLCGKAFGLRTHLQQHQRIH).

The protein belongs to the krueppel C2H2-type zinc-finger protein family. In terms of assembly, interacts with the SLBP/pre-mRNA complex but not with SLBP alone. Interacts with LSM11 in a U7 snRNP-dependent manner.

The protein localises to the nucleus. Involved in histone 3'-end pre-mRNA processing by associating with U7 snRNP and interacting with SLBP/pre-mRNA complex. Increases histone 3'-end pre-mRNA processing but has no effect on U7 snRNP levels, when overexpressed. Required for cell cycle progression from G1 to S phases. The protein is Zinc finger protein 473 homolog (Znf473) of Mus musculus (Mouse).